The sequence spans 303 residues: Ribosomal protein L11 methyltransferase (303 aa).

Thr146, Gly167, Asp189, and Asn236 together coordinate S-adenosyl-L-methionine.

Belongs to the methyltransferase superfamily. PrmA family.

It is found in the cytoplasm. The catalysed reaction is L-lysyl-[protein] + 3 S-adenosyl-L-methionine = N(6),N(6),N(6)-trimethyl-L-lysyl-[protein] + 3 S-adenosyl-L-homocysteine + 3 H(+). Methylates ribosomal protein L11. The sequence is that of Ribosomal protein L11 methyltransferase from Acinetobacter baylyi (strain ATCC 33305 / BD413 / ADP1).